We begin with the raw amino-acid sequence, 369 residues long: RING-H2 finger protein ATL47 (369 aa).

Residues 52 to 72 (IILFIIVLLSVIFFICSILHL) form a helical membrane-spanning segment. The segment at 144-186 (CAVCLCEFSEDDKLRLLPNCSHAFHIDCIDTWLLSNSTCPLCR) adopts an RING-type; atypical zinc-finger fold. A disordered region spans residues 332-355 (NNHPSETNLVVGGSSSSSSYVCSG). A compositionally biased stretch (low complexity) spans 341 to 355 (VVGGSSSSSSYVCSG).

It belongs to the RING-type zinc finger family. ATL subfamily.

It localises to the membrane. It carries out the reaction S-ubiquitinyl-[E2 ubiquitin-conjugating enzyme]-L-cysteine + [acceptor protein]-L-lysine = [E2 ubiquitin-conjugating enzyme]-L-cysteine + N(6)-ubiquitinyl-[acceptor protein]-L-lysine.. It functions in the pathway protein modification; protein ubiquitination. The protein is RING-H2 finger protein ATL47 (ATL47) of Arabidopsis thaliana (Mouse-ear cress).